We begin with the raw amino-acid sequence, 576 residues long: Arginine--tRNA ligase (576 aa).

The 'HIGH' region motif lies at 126–136 (ANPTGPMHIGH).

This sequence belongs to the class-I aminoacyl-tRNA synthetase family. As to quaternary structure, monomer.

The protein localises to the cytoplasm. The enzyme catalyses tRNA(Arg) + L-arginine + ATP = L-arginyl-tRNA(Arg) + AMP + diphosphate. The sequence is that of Arginine--tRNA ligase from Rickettsia canadensis (strain McKiel).